A 153-amino-acid polypeptide reads, in one-letter code: Small ribosomal subunit protein bS16 (153 aa).

The segment at Glu-114 to Lys-153 is disordered. Positions Ala-137 to Lys-153 are enriched in low complexity.

It belongs to the bacterial ribosomal protein bS16 family.

This Rhodococcus jostii (strain RHA1) protein is Small ribosomal subunit protein bS16.